The chain runs to 119 residues: Large ribosomal subunit protein bL20 (119 aa).

Belongs to the bacterial ribosomal protein bL20 family.

Its function is as follows. Binds directly to 23S ribosomal RNA and is necessary for the in vitro assembly process of the 50S ribosomal subunit. It is not involved in the protein synthesizing functions of that subunit. The chain is Large ribosomal subunit protein bL20 from Xylella fastidiosa (strain M12).